A 483-amino-acid chain; its full sequence is Putative inorganic phosphate cotransporter (483 aa).

The next 7 helical transmembrane spans lie at 64–84, 90–110, 187–207, 292–312, 349–369, 383–403, and 420–440; these read YILS…GILA, LRFL…VPVA, IFYV…IFVY, LPYL…DWMI, ALTL…YSGF, FLMS…PIAA, and IVFF…NIFG. The interval 447–483 is disordered; that stretch reads WDNPSEDEQKPALESSSTTNPPRLSNGSSAPRAISSS. The span at 460–483 shows a compositional bias: polar residues; it reads ESSSTTNPPRLSNGSSAPRAISSS.

Belongs to the major facilitator superfamily. Sodium/anion cotransporter family.

Its subcellular location is the membrane. Its function is as follows. May be an inorganic phosphate cotransporter. This chain is Putative inorganic phosphate cotransporter (Picot), found in Drosophila ananassae (Fruit fly).